A 141-amino-acid polypeptide reads, in one-letter code: Auxin-responsive protein SAUR63 (141 aa).

The protein belongs to the ARG7 family. As to expression, expressed in hypocotyls, cotyledons, petioles, young rosette leaves, apical portion of inflorescence stems, stamen filaments and petals.

It localises to the cell membrane. Functionally, may promote auxin-stimulated organ elongation, such as hypocotyls, stamen filaments and petals. This chain is Auxin-responsive protein SAUR63, found in Arabidopsis thaliana (Mouse-ear cress).